Here is a 64-residue protein sequence, read N- to C-terminus: Large ribosomal subunit protein bL33 (64 aa).

This sequence belongs to the bacterial ribosomal protein bL33 family.

The protein is Large ribosomal subunit protein bL33 of Nostoc sp. (strain PCC 7120 / SAG 25.82 / UTEX 2576).